Reading from the N-terminus, the 461-residue chain is Thyroid hormone receptor beta (461 aa).

The disordered stretch occupies residues Met1–Gly24. The interval Met1–Leu106 is modulating. Residues Ala13–Gly24 show a composition bias toward basic and acidic residues. Residues Cys107, Cys110, Cys124, Cys127, Cys145, Cys151, Cys161, and Cys164 each coordinate Zn(2+). NR C4-type zinc fingers lie at residues Cys107–Cys127 and Cys145–Cys169. The segment at residues Cys107 to Asp181 is a DNA-binding region (nuclear receptor). The NR LBD domain maps to Glu217 to Asp461. The interval Lys244 to Asp461 is interaction with NR2F6. 3 residues coordinate 3,3',5-triiodo-L-thyronine: Arg282, Asn331, and His435. Residues Arg282, Asn331, and His435 each contribute to the L-thyroxine site.

Belongs to the nuclear hormone receptor family. NR1 subfamily. As to quaternary structure, binds DNA as a dimer; homodimer and heterodimer with RXRA. Interacts with the coactivators NCOA1/SRC1, NCOA2/GRIP1, NCOA7 and MED1/TRAP220 in a ligand-inducible manner. Interacts with the corepressor NCOR1 in absence of ligand. Interacts with C1D. Interacts with NR2F6; the interaction impairs the binding of the THRB homodimer and THRB:RXRB heterodimer to T3 response elements. Interacts with PRMT2 and THRSP. Interacts with TACC1; this interaction is decreased in the presence of thyroid hormone T3.

The protein localises to the nucleus. In terms of biological role, nuclear hormone receptor that can act as a repressor or activator of transcription. High affinity receptor for thyroid hormones, including triiodothyronine and thyroxine. The chain is Thyroid hormone receptor beta (Thrb) from Rattus norvegicus (Rat).